The following is a 1052-amino-acid chain: Multidrug resistance protein MdtB (1052 aa).

The next 11 membrane-spanning stretches (helical) occupy residues 15–37, 345–362, 367–389, 396–418, 438–460, 472–494, 535–557, 867–889, 909–931, 968–990, and 1000–1022; these read LFIL…GIIG, FELL…YLFL, ATII…MYFL, LTLM…VIEN, GEIG…PLLF, FAVT…TPMM, HPWL…YLLI, LWLI…ESFI, LMLT…IGIV, ILMT…GVGA, and MVGG…YLLF. Residues 1032 to 1052 are disordered; the sequence is KNRHRDEDIDSSELLNGQEPQ.

It belongs to the resistance-nodulation-cell division (RND) (TC 2.A.6) family. MdtB subfamily. In terms of assembly, part of a tripartite efflux system composed of MdtA, MdtB and MdtC. MdtB forms a heteromultimer with MdtC.

It is found in the cell inner membrane. In Yersinia pseudotuberculosis serotype I (strain IP32953), this protein is Multidrug resistance protein MdtB.